The primary structure comprises 344 residues: Programmed cell death protein 2 (344 aa).

Residues Cys-135, Cys-138, Cys-146, Cys-149, Cys-155, His-159, His-168, and Cys-172 each coordinate Zn(2+). The segment at 135–172 (CRVCGCSGPKRCSRCHKAHYCSKEHQSLDWRLGHKQAC) adopts an MYND-type; atypical zinc-finger fold.

In terms of processing, ubiquitinated by PRKN, promoting proteasomal degradation.

It is found in the nucleus. In terms of biological role, may be a DNA-binding protein with a regulatory function. May play an important role in cell death and/or in regulation of cell proliferation. The chain is Programmed cell death protein 2 (PDCD2) from Bos taurus (Bovine).